The sequence spans 120 residues: Large ribosomal subunit protein uL18 (120 aa).

The protein belongs to the universal ribosomal protein uL18 family. As to quaternary structure, part of the 50S ribosomal subunit; part of the 5S rRNA/L5/L18/L25 subcomplex. Contacts the 5S and 23S rRNAs.

Its function is as follows. This is one of the proteins that bind and probably mediate the attachment of the 5S RNA into the large ribosomal subunit, where it forms part of the central protuberance. The chain is Large ribosomal subunit protein uL18 from Chloroflexus aggregans (strain MD-66 / DSM 9485).